We begin with the raw amino-acid sequence, 187 residues long: Elongation factor P (187 aa).

This sequence belongs to the elongation factor P family.

The protein localises to the cytoplasm. It participates in protein biosynthesis; polypeptide chain elongation. Its function is as follows. Involved in peptide bond synthesis. Stimulates efficient translation and peptide-bond synthesis on native or reconstituted 70S ribosomes in vitro. Probably functions indirectly by altering the affinity of the ribosome for aminoacyl-tRNA, thus increasing their reactivity as acceptors for peptidyl transferase. This chain is Elongation factor P, found in Tolumonas auensis (strain DSM 9187 / NBRC 110442 / TA 4).